The chain runs to 204 residues: MQLEISPRQRSQQQKEEEGEHQQRAGEEAVGAVFSIEPWVDAAAVLVPPLNFAEVNDGIFRSGFPAADNFAFLLSLKLRSIVYLCPEPYPEENTRFLEQNGIKLHQFGIDGSKELLVNIPEEKIREALKVILDVRNQPVLIHCKRGKHRTGCVVGCLRKLQKWCLTSVFDEYQHFAAAKARSTDQRFMELFDTSSLMHLTASQC.

The tract at residues 1-27 (MQLEISPRQRSQQQKEEEGEHQQRAGE) is disordered. A compositionally biased stretch (basic and acidic residues) spans 13–27 (QQKEEEGEHQQRAGE). In terms of domain architecture, Tyrosine-protein phosphatase spans 51-203 (NFAEVNDGIF…SSLMHLTASQ (153 aa)). The WPD loop important for active site topology stretch occupies residues 107–119 (FGIDGSKELLVNI). 1D-myo-inositol hexakisphosphate is bound by residues Asn118, Ile119, and Lys123. The active-site Phosphocysteine intermediate is Cys143.

This sequence belongs to the protein-tyrosine phosphatase family. Atypical dual-specificity phosphatase Siw14-like subfamily. Expressed in roots and young panicles.

The protein localises to the cytoplasm. Its subcellular location is the nucleus. The enzyme catalyses 5-diphospho-1D-myo-inositol 1,2,3,4,6-pentakisphosphate + H2O = 1D-myo-inositol hexakisphosphate + phosphate + H(+). The catalysed reaction is 1,5-bis(diphospho)-1D-myo-inositol 2,3,4,6-tetrakisphosphate + H2O = 1-diphospho-1D-myo-inositol 2,3,4,5,6-pentakisphosphate + phosphate + 2 H(+). It carries out the reaction 3,5-bis(diphospho)-1D-myo-inositol 1,2,4,6-tetrakisphosphate + H2O = 3-diphospho-1D-myo-inositol 1,2,4,5,6-pentakisphosphate + phosphate + 2 H(+). It catalyses the reaction 6-diphospho-1D-myo-inositol pentakisphosphate + H2O = 1D-myo-inositol hexakisphosphate + phosphate + H(+). Cleaves the beta-phosphate at the 5-position of soluble inositol pyrophosphates. Has highest activity on 5-diphosphoinositol 1,2,3,4,6-pentakisphosphate (5-InsP(7)). Acts as a negative regulator of defense responses against the fungal pathogen Magnaporthe oryzae. The polypeptide is Inositol diphosphatase DSP2 (Oryza sativa subsp. japonica (Rice)).